Here is a 355-residue protein sequence, read N- to C-terminus: Oligopeptide transport ATP-binding protein AmiE (355 aa).

Residues 9–260 (LTARDIVVEF…PRHPYTWSLL (252 aa)) form the ABC transporter domain. 45-52 (GESGSGKS) lines the ATP pocket.

Belongs to the ABC transporter superfamily.

It is found in the cell membrane. Its function is as follows. Part of the binding-protein-dependent transport system for oligopeptides. Probably responsible for energy coupling to the transport system. This Streptococcus pneumoniae serotype 4 (strain ATCC BAA-334 / TIGR4) protein is Oligopeptide transport ATP-binding protein AmiE (amiE).